A 324-amino-acid polypeptide reads, in one-letter code: MFAHRSFSLLCRRSAVTSWRSQSHTAGKRLDISGIYPPIATPFTEPEDVDYQKLDDNIRKYGRLPFRGLVVQGSNGEYPYLTAEERVEVVKRVKQALPKDKLVMAGSGCESTRATIQMSQRMADAGADCVLVVTPCFYRGRMDSRALINHYSKVADSCSVPVVLYSVPANTGLDLPVDAVIQLSKHPNIVGLKDSGGDITRIALMVQKTRSQDFQVLAGSAGFLMAAYAVGAVGGVCALANVLGQQVCELAQLCVSGRWDEAKELQYRLIEPNTAVTRGFGVPALKLAMDWFGYHGGICRSPLQPLSKADLEALRGKFSSNGWL.

Residues 1–22 (MFAHRSFSLLCRRSAVTSWRSQ) constitute a mitochondrion transit peptide. Residue 74–75 (SN) coordinates substrate. The Schiff-base intermediate with substrate role is filled by Lys193. Substrate contacts are provided by Ser195 and Gly219.

Belongs to the DapA family. Homotetramer.

The protein resides in the mitochondrion. The catalysed reaction is (4S)-4-hydroxy-2-oxoglutarate = glyoxylate + pyruvate. The enzyme catalyses (4R)-4-hydroxy-2-oxoglutarate = glyoxylate + pyruvate. Inhibited by divalent cations. Functionally, catalyzes the final step in the metabolic pathway of hydroxyproline. This chain is 4-hydroxy-2-oxoglutarate aldolase, mitochondrial, found in Danio rerio (Zebrafish).